The sequence spans 328 residues: dITP/XTP pyrophosphatase (328 aa).

The unknown stretch occupies residues 1 to 129; it reads MSEKIYEYKD…ATSEQGFGDI (129 aa). Positions 130-324 are NTP pyrophosphatase; that stretch reads ILIATRNEGK…KLMEVFPAWQ (195 aa). 134-139 contacts substrate; the sequence is TRNEGK. Asp196 acts as the Proton acceptor in catalysis. Asp196 is a binding site for Mg(2+). Substrate-binding positions include Ser197, 280–283, Lys303, and 308–309; these read FGYD and HR.

The protein belongs to the HAM1 NTPase family. As to quaternary structure, homodimer. Mg(2+) is required as a cofactor.

It catalyses the reaction XTP + H2O = XMP + diphosphate + H(+). The enzyme catalyses dITP + H2O = dIMP + diphosphate + H(+). The catalysed reaction is ITP + H2O = IMP + diphosphate + H(+). Functionally, pyrophosphatase that catalyzes the hydrolysis of nucleoside triphosphates to their monophosphate derivatives, with a high preference for the non-canonical purine nucleotides XTP (xanthosine triphosphate), dITP (deoxyinosine triphosphate) and ITP. Seems to function as a house-cleaning enzyme that removes non-canonical purine nucleotides from the nucleotide pool, thus preventing their incorporation into DNA/RNA and avoiding chromosomal lesions. The protein is dITP/XTP pyrophosphatase of Streptococcus pyogenes serotype M3 (strain ATCC BAA-595 / MGAS315).